A 68-amino-acid chain; its full sequence is Protein P33 (68 aa).

Positions 34 to 63 (IVNLQGRIAELEARETEMLARVDTLIARLA) form a coiled coil.

In terms of biological role, assembly protein. In Acinetobacter calcoaceticus (Arthrobacter siderocapsulatus), this protein is Protein P33 (XXXIII).